Here is a 243-residue protein sequence, read N- to C-terminus: 7-cyano-7-deazaguanine synthase (243 aa).

18–28 (FSGGQDSATCL) serves as a coordination point for ATP. Residues Cys206, Cys221, Cys224, and Cys227 each coordinate Zn(2+).

This sequence belongs to the QueC family. Zn(2+) serves as cofactor.

It catalyses the reaction 7-carboxy-7-deazaguanine + NH4(+) + ATP = 7-cyano-7-deazaguanine + ADP + phosphate + H2O + H(+). It functions in the pathway purine metabolism; 7-cyano-7-deazaguanine biosynthesis. Its function is as follows. Catalyzes the ATP-dependent conversion of 7-carboxy-7-deazaguanine (CDG) to 7-cyano-7-deazaguanine (preQ(0)). This chain is 7-cyano-7-deazaguanine synthase, found in Methylorubrum extorquens (strain CM4 / NCIMB 13688) (Methylobacterium extorquens).